Consider the following 411-residue polypeptide: Thyroid hormone receptor beta (411 aa).

The segment at Met-1 to Glu-24 is disordered. The tract at residues Met-1–Leu-104 is modulating. Positions Asp-15–Glu-24 are enriched in basic and acidic residues. Zn(2+) is bound by residues Cys-105, Cys-108, Cys-122, Cys-125, Cys-143, Cys-149, Cys-159, and Cys-162. 2 consecutive NR C4-type zinc fingers follow at residues Cys-105–Cys-125 and Cys-143–Cys-167. Positions Cys-105–Asp-179 form a DNA-binding region, nuclear receptor. In terms of domain architecture, NR LBD spans Gln-215 to Ser-411. The segment at Lys-242 to Ser-411 is interaction with NR2F6. 3,3',5-triiodo-L-thyronine is bound by residues Arg-280 and Asn-329. Residues Arg-280 and Asn-329 each contribute to the L-thyroxine site.

This sequence belongs to the nuclear hormone receptor family. NR1 subfamily. As to quaternary structure, binds DNA as a dimer; homodimer and heterodimer with RXRA. Interacts with the coactivators NCOA1/SRC1, NCOA2/GRIP1, NCOA7 and MED1/TRAP220 in a ligand-inducible manner. Interacts with the corepressor NCOR1 in absence of ligand. Interacts with C1D. Interacts with NR2F6; the interaction impairs the binding of the THRB homodimer and THRB:RXRB heterodimer to T3 response elements. Interacts with PRMT2 and THRSP. Interacts with TACC1; this interaction is decreased in the presence of thyroid hormone T3.

It localises to the nucleus. Functionally, nuclear hormone receptor that can act as a repressor or activator of transcription. High affinity receptor for thyroid hormones, including triiodothyronine and thyroxine. In Ovis aries (Sheep), this protein is Thyroid hormone receptor beta (THRB).